The sequence spans 405 residues: Argininosuccinate synthase (405 aa).

12 to 20 (AYSGGLDTS) contacts ATP. 2 residues coordinate L-citrulline: tyrosine 90 and serine 95. An ATP-binding site is contributed by glycine 120. L-aspartate is bound by residues threonine 122, asparagine 126, and aspartate 127. Asparagine 126 serves as a coordination point for L-citrulline. Arginine 130, serine 179, serine 188, glutamate 265, and tyrosine 277 together coordinate L-citrulline.

This sequence belongs to the argininosuccinate synthase family. Type 1 subfamily. In terms of assembly, homotetramer.

The protein localises to the cytoplasm. The enzyme catalyses L-citrulline + L-aspartate + ATP = 2-(N(omega)-L-arginino)succinate + AMP + diphosphate + H(+). It functions in the pathway amino-acid biosynthesis; L-arginine biosynthesis; L-arginine from L-ornithine and carbamoyl phosphate: step 2/3. The sequence is that of Argininosuccinate synthase from Clostridium perfringens (strain 13 / Type A).